Reading from the N-terminus, the 169-residue chain is MTDTSFKYFMLKKLAWYWSFVELIKGFVITLKYMFKPKVTLRYPMEKGPLSPRFRGEHALRRYPNGEERCIACKLCEVICPAQAIVIEAEEREDGSRRTTRYDIDMIKCIYCGLCQEACPVDAIVEGPNFEFATETREELMYNKEKLLRNGEVWEDAIALRLKKNRPYY.

4Fe-4S ferredoxin-type domains follow at residues 60 to 90 (LRRY…IEAE) and 100 to 129 (TRYD…EGPN). Cys-70, Cys-73, Cys-76, Cys-80, Cys-109, Cys-112, Cys-115, and Cys-119 together coordinate [4Fe-4S] cluster.

This sequence belongs to the complex I 23 kDa subunit family. As to quaternary structure, NDH-1 is composed of 14 different subunits. Subunits NuoA, H, J, K, L, M, N constitute the membrane sector of the complex. [4Fe-4S] cluster is required as a cofactor.

It localises to the cell membrane. The enzyme catalyses a quinone + NADH + 5 H(+)(in) = a quinol + NAD(+) + 4 H(+)(out). Its function is as follows. NDH-1 shuttles electrons from NADH, via FMN and iron-sulfur (Fe-S) centers, to quinones in the respiratory chain. The immediate electron acceptor for the enzyme in this species is believed to be ubiquinone. Couples the redox reaction to proton translocation (for every two electrons transferred, four hydrogen ions are translocated across the cytoplasmic membrane), and thus conserves the redox energy in a proton gradient. The polypeptide is NADH-quinone oxidoreductase subunit I (Wolbachia pipientis wMel).